A 377-amino-acid chain; its full sequence is Glutamate 5-kinase (377 aa).

Lys22 lines the ATP pocket. Residues Ser62, Asp149, and Asn161 each coordinate substrate. Residues 181 to 182 (TD) and 223 to 229 (TGGMVTK) each bind ATP. The PUA domain maps to 285–363 (RGVLVADSGA…AQLRRLLGEE (79 aa)).

This sequence belongs to the glutamate 5-kinase family.

It localises to the cytoplasm. The enzyme catalyses L-glutamate + ATP = L-glutamyl 5-phosphate + ADP. The protein operates within amino-acid biosynthesis; L-proline biosynthesis; L-glutamate 5-semialdehyde from L-glutamate: step 1/2. Catalyzes the transfer of a phosphate group to glutamate to form L-glutamate 5-phosphate. The protein is Glutamate 5-kinase of Bifidobacterium animalis subsp. lactis (strain AD011).